Reading from the N-terminus, the 311-residue chain is JNK1/MAPK8-associated membrane protein (311 aa).

The Lumenal segment spans residues 1 to 57; that stretch reads MAVDIQPACLGLYCGKTLLFKNGSTEIYGECGVCPRGQRTNAQKYCQPCTESPELYD. N-linked (GlcNAc...) asparagine glycosylation is present at Asn22. A helical transmembrane segment spans residues 58–78; sequence WLYLGFMAMLPLVLHWFFIEW. Topologically, residues 79–87 are cytoplasmic; that stretch reads YSGKKSSSA. The chain crosses the membrane as a helical span at residues 88-108; the sequence is LFQHITALFECSMAAIITLLV. Residues 109 to 149 are Lumenal-facing; the sequence is SDPVGVLYIRSCRVLMLSDWYTMLYNPSPDYVTTVHCTHEA. Residues 150-170 form a helical membrane-spanning segment; sequence VYPLYTIVFIYYAFCLVLMML. Topologically, residues 171-188 are cytoplasmic; sequence LRPLLVKKIACGLGKSDR. The helical transmembrane segment at 189–209 threads the bilayer; it reads FKSIYAALYFFPILTVLQAVG. A topological domain (lumenal) is located at residue Gly210. Residues 211–231 form a helical membrane-spanning segment; that stretch reads GLLYYAFPYIILVLSLVTLAV. Topologically, residues 232 to 250 are cytoplasmic; that stretch reads YMSASEIENCYDLLVRKKR. Residues 251-271 traverse the membrane as a helical segment; that stretch reads LIVLFSHWLLHAYGIISISRV. Residues 272–277 lie on the Lumenal side of the membrane; that stretch reads DKLEQD. A helical transmembrane segment spans residues 278-298; that stretch reads LPLLALVPTPALFYLFTAKFT. Residues 299-311 lie on the Cytoplasmic side of the membrane; sequence EPSRILSEGANGH.

In terms of assembly, interacts with RNF5 and MAPK8, but not with MAPK9. Binding to MAPK8 occurs before and after exposure to stress, such as UV irradiation. After exposure to stress, interacts with phosphorylated MAPK8. Competes with DUSP10 for MAPK8 binding. Associates with multiple components of the proteasome and with ERAD regulatory proteins including AMFR/GP78, CANX, PSMC1, PSMC2, PSMC3/TBP1, PSMC5, PSMC6, PSMD8, SEC61-ALPHA and UFD1. Interacts with DERL1 (in the presence of misfolded protein CFTR(F508del)). Post-translationally, ubiquitinated by RNF5 via 'Lys-63'-linked ubiquitin linkage in a UBE2N-dependent manner. Ubiquitination decreases association with components of the proteasome and ERAD.

It is found in the endoplasmic reticulum membrane. Regulates the duration of MAPK8 activity in response to various stress stimuli. Facilitates degradation of misfolded endoplasmic reticulum (ER) proteins through the recruitment of components of the proteasome and endoplasmic reticulum-associated degradation (ERAD) system. This is JNK1/MAPK8-associated membrane protein (JKAMP) from Homo sapiens (Human).